A 570-amino-acid polypeptide reads, in one-letter code: 2-isopropylmalate synthase (570 aa).

The Pyruvate carboxyltransferase domain maps to 31-305; sequence PIWMSTDLRD…DPELDFSHIN (275 aa). The Mg(2+) site is built by Asp-40, His-244, His-246, and Asn-280. A regulatory domain region spans residues 437–570; that stretch reads SDGAIGYVSH…RRSSAQATVA (134 aa).

This sequence belongs to the alpha-IPM synthase/homocitrate synthase family. LeuA type 2 subfamily. In terms of assembly, homodimer. Mg(2+) serves as cofactor.

It localises to the cytoplasm. The catalysed reaction is 3-methyl-2-oxobutanoate + acetyl-CoA + H2O = (2S)-2-isopropylmalate + CoA + H(+). Its pathway is amino-acid biosynthesis; L-leucine biosynthesis; L-leucine from 3-methyl-2-oxobutanoate: step 1/4. Catalyzes the condensation of the acetyl group of acetyl-CoA with 3-methyl-2-oxobutanoate (2-ketoisovalerate) to form 3-carboxy-3-hydroxy-4-methylpentanoate (2-isopropylmalate). This chain is 2-isopropylmalate synthase, found in Ralstonia pickettii (strain 12J).